Here is a 62-residue protein sequence, read N- to C-terminus: Statherin (62 aa).

The N-terminal stretch at 1–19 (MKFLVFAFILALMVSMIGA) is a signal peptide. Residues 20 to 25 (DSSEEK) are hydroxyapatite-binding; inhibits crystal growth. Phosphoserine is present on residues serine 21 and serine 22. A cross-link (isoglutamyl lysine isopeptide (Lys-Gln); in form cyclo-statherin Q-37) is located at residues 25–56 (KFLRRIGRFGYGYGPYQPVPEQPLYPQPYQPQ). Residues 25–58 (KFLRRIGRFGYGYGPYQPVPEQPLYPQPYQPQYQ) constitute a cross-link (isoglutamyl lysine isopeptide (Lys-Gln); in form cyclo-statherin Q-39). The interval 38 to 62 (GPYQPVPEQPLYPQPYQPQYQQYTF) is hydrophobic; inhibits precipitation of calcium phosphate salts.

It belongs to the histatin/statherin family. Substrate for transglutaminase-2. More than 95% of the cyclized peptide is cyclo-statherin Q-37, and less than 5% is cyclo-statherin Q-39. Cyclized forms account for about 1% of total statherin in saliva. In terms of processing, sulfated on tyrosine residues. Secreted by parotid and submandibular glands.

The protein resides in the secreted. Functionally, salivary protein that stabilizes saliva supersaturated with calcium salts by inhibiting the precipitation of calcium phosphate salts. It also modulates hydroxyapatite crystal formation on the tooth surface. This Homo sapiens (Human) protein is Statherin (STATH).